A 267-amino-acid polypeptide reads, in one-letter code: Myxobacterial hemagglutinin (267 aa).

4 consecutive repeat copies span residues 1–66 (MAAY…GTLS), 67–133 (SANN…SEVT), 134–200 (DGDT…GTLT), and 201–267 (SPDT…ARLG). A 4 X 65 AA tandem repeats region spans residues 1-267 (MAAYLVQNQW…GPIGFRARLG (267 aa)).

The protein belongs to the bacterial lectin family.

This lectin might have a role in the differentiation of cells. The chain is Myxobacterial hemagglutinin (mbhA) from Myxococcus xanthus.